A 317-amino-acid chain; its full sequence is Transcription factor EC (317 aa).

The interval 1-44 (MTLDHQILNQSFKRSHPPTPSSELLVQHGHPSPESDTGLTGNPL) is disordered. The tract at residues 1-90 (MTLDHQILNQ…GLTSASCPSS (90 aa)) is necessary for transcriptional transactivation. The segment covering 34 to 43 (ESDTGLTGNP) has biased composition (polar residues). Residues 110-163 (QKKDNHNLIERRRRYNINYRIKELGTLIPKSNDPDMRWNKGTILKASVEYIKWL) enclose the bHLH domain. The tract at residues 241–317 (TSPELCDQAM…SFSSEDGDEL (77 aa)) is necessary for transcriptional transactivation. Positions 297–317 (PAVSKESSRRSSFSSEDGDEL) are disordered.

This sequence belongs to the MiT/TFE family. In terms of assembly, homodimer. Forms heterodimers with MITF and TFE3. Interacts with MITF.

The protein localises to the nucleus. Its function is as follows. Transcriptional regulator that acts as a repressor or an activator. Acts as a transcriptional repressor on minimal promoter containing element F (that includes an E-box sequence). Binds to element F in an E-box sequence-specific manner. Acts as a transcriptional transactivator on the proximal promoter region of the tartrate-resistant acid phosphatase (TRAP) E-box containing promoter. Collaborates with MITF in target gene activation. Acts as a transcriptional repressor on minimal promoter containing mu E3 enhancer sequence. Binds to mu E3 DNA sequence of the immunoglobulin heavy-chain gene enhancer. Binds DNA in a homo- or heterodimeric form. This Bos taurus (Bovine) protein is Transcription factor EC (TFEC).